The primary structure comprises 146 residues: Large ribosomal subunit protein bL9 (146 aa).

The protein belongs to the bacterial ribosomal protein bL9 family.

Functionally, binds to the 23S rRNA. The polypeptide is Large ribosomal subunit protein bL9 (Symbiobacterium thermophilum (strain DSM 24528 / JCM 14929 / IAM 14863 / T)).